The following is a 155-amino-acid chain: Transcriptional regulator MraZ (155 aa).

SpoVT-AbrB domains lie at 7–63 (REQH…EPSV) and 92–135 (LDQT…EPLR).

The protein belongs to the MraZ family. Forms oligomers.

The protein localises to the cytoplasm. Its subcellular location is the nucleoid. The protein is Transcriptional regulator MraZ of Chlorobaculum tepidum (strain ATCC 49652 / DSM 12025 / NBRC 103806 / TLS) (Chlorobium tepidum).